The primary structure comprises 117 residues: CUE domain-containing protein CUE4 (117 aa).

The tract at residues 27 to 74 is disordered; it reads QVPSRTVQDAKPAPSVATNDPSPEPVPSAPEERVARLNRHGSDRKRAV. Lysine 37 is covalently cross-linked (Glycyl lysine isopeptide (Lys-Gly) (interchain with G-Cter in ubiquitin)). Serine 48 is subject to Phosphoserine. Over residues 56 to 74 the composition is skewed to basic and acidic residues; it reads PEERVARLNRHGSDRKRAV. The CUE domain maps to 74 to 116; it reads VNSDMVEIVMTMAPHVPQEKVVQDLRNTGSIEHTMENIFAGKL.

Post-translationally, ubiquitinated.

The protein localises to the cytoplasm. It localises to the endoplasmic reticulum. This Saccharomyces cerevisiae (strain ATCC 204508 / S288c) (Baker's yeast) protein is CUE domain-containing protein CUE4 (CUE4).